The sequence spans 377 residues: uncharacterized protein (377 aa).

Residues 21-43 (YFISFSALFLIAYMFVAAVPLGA) traverse the membrane as a helical segment.

It localises to the membrane. This is an uncharacterized protein from Treponema pallidum (strain Nichols).